A 99-amino-acid polypeptide reads, in one-letter code: Large ribosomal subunit protein uL23 (99 aa).

Belongs to the universal ribosomal protein uL23 family. In terms of assembly, part of the 50S ribosomal subunit. Contacts protein L29, and trigger factor when it is bound to the ribosome.

Its function is as follows. One of the early assembly proteins it binds 23S rRNA. One of the proteins that surrounds the polypeptide exit tunnel on the outside of the ribosome. Forms the main docking site for trigger factor binding to the ribosome. The protein is Large ribosomal subunit protein uL23 of Lachnospira eligens (strain ATCC 27750 / DSM 3376 / VPI C15-48 / C15-B4) (Eubacterium eligens).